A 275-amino-acid polypeptide reads, in one-letter code: Expansin-A23 (275 aa).

The signal sequence occupies residues 1 to 27 (MNLLGKMIYVEGFMMIMATLLVSMSYG). In terms of domain architecture, Expansin-like EG45 spans 72–182 (QGACGYGDLF…RRISCARTGG (111 aa)). The Expansin-like CBD domain maps to 192 to 271 (YFLMILPYNV…NWGFGQTFDG (80 aa)).

Belongs to the expansin family. Expansin A subfamily.

It is found in the secreted. It localises to the cell wall. Its subcellular location is the membrane. Causes loosening and extension of plant cell walls by disrupting non-covalent bonding between cellulose microfibrils and matrix glucans. No enzymatic activity has been found. In Arabidopsis thaliana (Mouse-ear cress), this protein is Expansin-A23 (EXPA23).